A 161-amino-acid polypeptide reads, in one-letter code: Small ribosomal subunit protein uS9 (161 aa).

The protein belongs to the universal ribosomal protein uS9 family.

This chain is Small ribosomal subunit protein uS9, found in Rickettsia canadensis (strain McKiel).